Reading from the N-terminus, the 214-residue chain is ATP-dependent Clp protease proteolytic subunit 2 (214 aa).

Ser110 (nucleophile) is an active-site residue. His135 is a catalytic residue.

It belongs to the peptidase S14 family. As to quaternary structure, fourteen ClpP subunits assemble into 2 heptameric rings which stack back to back to give a disk-like structure with a central cavity, resembling the structure of eukaryotic proteasomes.

It localises to the cytoplasm. The enzyme catalyses Hydrolysis of proteins to small peptides in the presence of ATP and magnesium. alpha-casein is the usual test substrate. In the absence of ATP, only oligopeptides shorter than five residues are hydrolyzed (such as succinyl-Leu-Tyr-|-NHMec, and Leu-Tyr-Leu-|-Tyr-Trp, in which cleavage of the -Tyr-|-Leu- and -Tyr-|-Trp bonds also occurs).. In terms of biological role, cleaves peptides in various proteins in a process that requires ATP hydrolysis. Has a chymotrypsin-like activity. Plays a major role in the degradation of misfolded proteins. The protein is ATP-dependent Clp protease proteolytic subunit 2 of Mycobacterium bovis (strain ATCC BAA-935 / AF2122/97).